A 108-amino-acid polypeptide reads, in one-letter code: UPF0060 membrane protein YnfA (108 aa).

Topologically, residues 1 to 5 (MIKTT) are periplasmic. A helical membrane pass occupies residues 6–26 (LLFFATALCEIIGCFLPWLWL). The Cytoplasmic segment spans residues 27–30 (KRNA). The helical transmembrane segment at 31–51 (SIWLLLPAGISLALFVWLLTL) threads the bilayer. Residues 52 to 60 (HPAASGRVY) lie on the Periplasmic side of the membrane. A helical membrane pass occupies residues 61 to 81 (AAYGGVYVCTALMWLRVVDGV). The Cytoplasmic portion of the chain corresponds to 82-84 (KLT). A helical transmembrane segment spans residues 85–105 (LYDWTGPLIALCGMLIIVVGW). The Periplasmic portion of the chain corresponds to 106–108 (GRT).

Belongs to the UPF0060 family.

The protein localises to the cell inner membrane. In Escherichia coli O157:H7, this protein is UPF0060 membrane protein YnfA.